Consider the following 330-residue polypeptide: GTP 3',8-cyclase (330 aa).

Residues 14–225 enclose the Radical SAM core domain; the sequence is RFGRTVDYVR…RERLADAYPE (212 aa). Position 23 (R23) interacts with GTP. [4Fe-4S] cluster is bound by residues C30 and C34. Y36 is a binding site for S-adenosyl-L-methionine. [4Fe-4S] cluster is bound at residue C37. A GTP-binding site is contributed by R70. G74 contacts S-adenosyl-L-methionine. T101 is a binding site for GTP. S-adenosyl-L-methionine is bound at residue S125. A GTP-binding site is contributed by K162. [4Fe-4S] cluster-binding residues include C259 and C262. Residue 264–266 coordinates GTP; the sequence is KLR. C276 is a [4Fe-4S] cluster binding site. Residues 309-318 show a composition bias toward basic and acidic residues; that stretch reads KPKDGLKSSH. Residues 309–330 form a disordered region; that stretch reads KPKDGLKSSHDTAASSMSQIGG. Residues 319-330 show a composition bias toward polar residues; that stretch reads DTAASSMSQIGG.

This sequence belongs to the radical SAM superfamily. MoaA family. As to quaternary structure, monomer and homodimer. Requires [4Fe-4S] cluster as cofactor.

The catalysed reaction is GTP + AH2 + S-adenosyl-L-methionine = (8S)-3',8-cyclo-7,8-dihydroguanosine 5'-triphosphate + 5'-deoxyadenosine + L-methionine + A + H(+). Its pathway is cofactor biosynthesis; molybdopterin biosynthesis. In terms of biological role, catalyzes the cyclization of GTP to (8S)-3',8-cyclo-7,8-dihydroguanosine 5'-triphosphate. This is GTP 3',8-cyclase from Chlorobaculum tepidum (strain ATCC 49652 / DSM 12025 / NBRC 103806 / TLS) (Chlorobium tepidum).